A 337-amino-acid polypeptide reads, in one-letter code: Glyceraldehyde-3-phosphate dehydrogenase 3, cytosolic (337 aa).

NAD(+)-binding positions include 13–14 (RI), aspartate 35, and arginine 82. Residues 153-155 (SCT), threonine 184, 213-214 (TG), and arginine 236 contribute to the D-glyceraldehyde 3-phosphate site. Residue cysteine 154 is the Nucleophile of the active site. Residue asparagine 318 coordinates NAD(+).

This sequence belongs to the glyceraldehyde-3-phosphate dehydrogenase family. As to quaternary structure, homotetramer.

It is found in the cytoplasm. It carries out the reaction D-glyceraldehyde 3-phosphate + phosphate + NAD(+) = (2R)-3-phospho-glyceroyl phosphate + NADH + H(+). The protein operates within carbohydrate degradation; glycolysis; pyruvate from D-glyceraldehyde 3-phosphate: step 1/5. Key enzyme in glycolysis that catalyzes the first step of the pathway by converting D-glyceraldehyde 3-phosphate (G3P) into 3-phospho-D-glyceroyl phosphate. Essential for the maintenance of cellular ATP levels and carbohydrate metabolism. In Oryza sativa subsp. japonica (Rice), this protein is Glyceraldehyde-3-phosphate dehydrogenase 3, cytosolic (GAPC3).